Consider the following 177-residue polypeptide: MADFNQILTPGDVDGGIINVVNEIPAGSNHKIEWNRKLAAFQLDRVEPAIFAKPTNYGFIPQTLDEDGDELDVLLVTEQPLATGVFLEARVIGVMKFVDDGEVDDKIVCVPADDRNNGNAYKTLSDLPQQLIKQIEFHFNHYKDLKKAGTTKVESWGDAEEAKKVIKESIERWNKQA.

Residues Lys-31, Arg-45, and Tyr-57 each coordinate substrate. Residues Asp-67, Asp-72, and Asp-104 each contribute to the Mg(2+) site. Tyr-142 is a binding site for substrate.

Belongs to the PPase family. Homohexamer. It depends on Mg(2+) as a cofactor.

The protein resides in the cytoplasm. The catalysed reaction is diphosphate + H2O = 2 phosphate + H(+). Functionally, catalyzes the hydrolysis of inorganic pyrophosphate (PPi) forming two phosphate ions. The chain is Inorganic pyrophosphatase from Neisseria meningitidis serogroup B (strain ATCC BAA-335 / MC58).